Reading from the N-terminus, the 405-residue chain is Replication factor C large subunit (405 aa).

An ATP-binding site is contributed by 47–54; that stretch reads GPPGVGKT.

Belongs to the activator 1 small subunits family. RfcL subfamily. Heteromultimer composed of small subunits (RfcS) and large subunits (RfcL).

Part of the RFC clamp loader complex which loads the PCNA sliding clamp onto DNA. The polypeptide is Replication factor C large subunit (Saccharolobus islandicus (strain Y.N.15.51 / Yellowstone #2) (Sulfolobus islandicus)).